An 884-amino-acid polypeptide reads, in one-letter code: Chondroitin sulfate synthase 3 (884 aa).

Topologically, residues 1 to 7 (MAVRSRR) are cytoplasmic. Residues 8-28 (PWVSVALGLVLGFTAASWLIA) traverse the membrane as a helical; Signal-anchor for type II membrane protein segment. Topologically, residues 29–884 (PRVAELSEKR…LGVRDNRTLS (856 aa)) are lumenal. The interval 47–164 (YYGRSATGPR…NGSGDGGAAV (118 aa)) is disordered. Composition is skewed to low complexity over residues 60-69 (QQLLPQPQSR) and 84-96 (PGPQ…PGGP). N-linked (GlcNAc...) asparagine glycans are attached at residues Asn155 and Asn281. The interval 437-456 (SNSEVSKEDQQLGRTPSFNH) is disordered. Asn712 is a glycosylation site (N-linked (GlcNAc...) asparagine). Residues Asp722 and His836 each contribute to the a divalent metal cation site. N-linked (GlcNAc...) asparagine glycosylation occurs at Asn880.

The protein belongs to the chondroitin N-acetylgalactosaminyltransferase family. It depends on Co(2+) as a cofactor. Mn(2+) is required as a cofactor. Cd(2+) serves as cofactor.

The protein localises to the golgi apparatus. The protein resides in the golgi stack membrane. The enzyme catalyses 3-O-(beta-D-GlcA-(1-&gt;3)-beta-D-GalNAc-(1-&gt;4)-beta-D-GlcA-(1-&gt;3)-beta-D-Gal-(1-&gt;3)-beta-D-Gal-(1-&gt;4)-beta-D-Xyl)-L-seryl-[protein] + UDP-N-acetyl-alpha-D-galactosamine = 3-O-(beta-D-GalNAc-(1-&gt;4)-beta-D-GlcA-(1-&gt;3)-beta-D-GalNAc-(1-&gt;4)-beta-D-GlcA-(1-&gt;3)-beta-D-Gal-(1-&gt;3)-beta-D-Gal-(1-&gt;4)-beta-D-Xyl)-L-seryl-[protein] + UDP + H(+). It carries out the reaction 3-O-{beta-D-GlcA-(1-&gt;3)-[beta-D-GalNAc-(1-&gt;4)-beta-D-GlcA-(1-&gt;3)](n)-beta-D-GalNAc-(1-&gt;4)-beta-D-GlcA-(1-&gt;3)-beta-D-Gal-(1-&gt;3)-beta-D-Gal-(1-&gt;4)-beta-D-Xyl}-L-seryl-[protein] + UDP-N-acetyl-alpha-D-galactosamine = 3-O-{[beta-D-GalNAc-(1-&gt;4)-beta-D-GlcA-(1-&gt;3)](n+1)-beta-D-GalNAc-(1-&gt;4)-beta-D-GlcA-(1-&gt;3)-beta-D-Gal-(1-&gt;3)-beta-D-Gal-(1-&gt;4)-beta-D-Xyl}-L-seryl-[protein] + UDP + H(+). The catalysed reaction is 3-O-(beta-D-GalNAc-(1-&gt;4)-beta-D-GlcA-(1-&gt;3)-beta-D-Gal-(1-&gt;3)-beta-D-Gal-(1-&gt;4)-beta-D-Xyl)-L-seryl-[protein] + UDP-alpha-D-glucuronate = 3-O-(beta-D-GlcA-(1-&gt;3)-beta-D-GalNAc-(1-&gt;4)-beta-D-GlcA-(1-&gt;3)-beta-D-Gal-(1-&gt;3)-beta-D-Gal-(1-&gt;4)-beta-D-Xyl)-L-seryl-[protein] + UDP + H(+). It catalyses the reaction 3-O-{[beta-D-GalNAc-(1-&gt;4)-beta-D-GlcA-(1-&gt;3)](n)-beta-D-GalNAc-(1-&gt;4)-beta-D-GlcA-(1-&gt;3)-beta-D-Gal-(1-&gt;3)-beta-D-Gal-(1-&gt;4)-beta-D-Xyl}-L-seryl-[protein] + UDP-alpha-D-glucuronate = 3-O-{beta-D-GlcA-(1-&gt;3)-[beta-D-GalNAc-(1-&gt;4)-beta-D-GlcA-(1-&gt;3)](n)-beta-D-GalNAc-(1-&gt;4)-beta-D-GlcA-(1-&gt;3)-beta-D-Gal-(1-&gt;3)-beta-D-Gal-(1-&gt;4)-beta-D-Xyl}-L-seryl-[protein] + UDP + H(+). Functionally, has both beta-1,3-glucuronic acid and beta-1,4-N-acetylgalactosamine transferase activity. Transfers glucuronic acid (GlcUA) from UDP-GlcUA and N-acetylgalactosamine (GalNAc) from UDP-GalNAc to the non-reducing end of the elongating chondroitin polymer. Specific activity is much reduced compared to CHSY1. The protein is Chondroitin sulfate synthase 3 (Chsy3) of Mus musculus (Mouse).